Reading from the N-terminus, the 81-residue chain is uncharacterized protein (81 aa).

Residues Ala-46–Ala-81 are disordered. Residues Val-51–Gln-73 show a composition bias toward basic residues.

This is an uncharacterized protein from Frog virus 3 (isolate Goorha) (FV-3).